Here is a 575-residue protein sequence, read N- to C-terminus: uncharacterized protein (575 aa).

Residues 1–120 (MKLIEHYVAL…YNMWLSEVFG (120 aa)) enclose the HTH marR-type domain. Residues 26 to 49 (LTEIADCLFCTERNAKLILHKLEN) constitute a DNA-binding region (H-T-H motif). Positions 176–490 (EPKPHLVHGW…FGFLHLLLSE (315 aa)) are solute-binding region.

In the C-terminal section; belongs to the bacterial solute-binding protein 5 family.

This is an uncharacterized protein from Bacillus subtilis (strain 168).